A 308-amino-acid chain; its full sequence is N-acetylmuramic acid 6-phosphate etherase (308 aa).

Positions 59–222 constitute an SIS domain; sequence TAERLRHGGR…STGVMVKLGK (164 aa). Residue Glu87 is the Proton donor of the active site. Glu118 is an active-site residue.

Belongs to the GCKR-like family. MurNAc-6-P etherase subfamily. Homodimer.

It carries out the reaction N-acetyl-D-muramate 6-phosphate + H2O = N-acetyl-D-glucosamine 6-phosphate + (R)-lactate. The protein operates within amino-sugar metabolism; N-acetylmuramate degradation. Specifically catalyzes the cleavage of the D-lactyl ether substituent of MurNAc 6-phosphate, producing GlcNAc 6-phosphate and D-lactate. The protein is N-acetylmuramic acid 6-phosphate etherase of Nostoc punctiforme (strain ATCC 29133 / PCC 73102).